The following is a 165-amino-acid chain: Plastocyanin, chloroplastic (165 aa).

Residues 1-66 constitute a chloroplast transit peptide; it reads MATVTSSAAV…AGILAGNAMA (66 aa). Positions 67–165 constitute a Plastocyanin-like domain; sequence AEVLLGSSDG…AGMVGKVTVN (99 aa). His103, Cys150, His153, and Met158 together coordinate Cu cation.

It belongs to the plastocyanin family. Requires Cu(2+) as cofactor.

The protein resides in the plastid. It localises to the chloroplast thylakoid membrane. Participates in electron transfer between P700 and the cytochrome b6-f complex in photosystem I. The protein is Plastocyanin, chloroplastic (PETE) of Silene latifolia subsp. alba (White campion).